We begin with the raw amino-acid sequence, 64 residues long: H/ACA ribonucleoprotein complex subunit 3-like protein (64 aa).

This sequence belongs to the NOP10 family. Component of the small nucleolar ribonucleoprotein particles containing H/ACA-type snoRNAs (H/ACA snoRNPs).

It localises to the nucleus. The protein localises to the nucleolus. Required for ribosome biogenesis. Part of a complex which catalyzes pseudouridylation of rRNA. This involves the isomerization of uridine such that the ribose is subsequently attached to C5, instead of the normal N1. Pseudouridine ('psi') residues may serve to stabilize the conformation of rRNAs. This Arabidopsis thaliana (Mouse-ear cress) protein is H/ACA ribonucleoprotein complex subunit 3-like protein.